The primary structure comprises 281 residues: sn-glycerol-3-phosphate transport system permease protein UgpE (281 aa).

The next 6 helical transmembrane spans lie at 16–36 (LILG…AATL), 85–105 (FSIT…IVWF), 113–133 (FFWM…FPTV), 142–162 (LDSY…TFLF), 202–222 (ALFV…LLII), and 247–267 (WNSV…IVLV). The 192-residue stretch at 77 to 268 (LLNSFVMAFS…IPPVVIVLVM (192 aa)) folds into the ABC transmembrane type-1 domain.

It belongs to the binding-protein-dependent transport system permease family. UgpAE subfamily. The complex is composed of two ATP-binding proteins (UgpC), two transmembrane proteins (UgpA and UgpE) and a solute-binding protein (UgpB).

It localises to the cell inner membrane. Functionally, part of the ABC transporter complex UgpBAEC involved in sn-glycerol-3-phosphate (G3P) import. Probably responsible for the translocation of the substrate across the membrane. Can also transport glycerophosphoryl diesters, which are hydrolyzed to G3P and alcohol during transport. The G3P moiety can be detected in the cytoplasm whereas the corresponding alcohol is usually found in the culture medium. It was proposed by Yang et al that the complex could also transport glycerol-2-phosphate (G2P) in vivo, but it was shown later by Wuttge et al that UgpB does not bind G2P, questioning this transport activity. G2P might be converted in the periplasm to G3P before its transport. The polypeptide is sn-glycerol-3-phosphate transport system permease protein UgpE (Escherichia coli (strain K12)).